A 190-amino-acid polypeptide reads, in one-letter code: Pyridoxal 5'-phosphate synthase subunit PdxT (190 aa).

46–48 provides a ligand contact to L-glutamine; it reads GES. Cys-78 functions as the Nucleophile in the catalytic mechanism. L-glutamine-binding positions include Arg-108 and 137–138; that span reads IR. Residues His-174 and Glu-176 each act as charge relay system in the active site.

It belongs to the glutaminase PdxT/SNO family. As to quaternary structure, in the presence of PdxS, forms a dodecamer of heterodimers. Only shows activity in the heterodimer.

The enzyme catalyses aldehydo-D-ribose 5-phosphate + D-glyceraldehyde 3-phosphate + L-glutamine = pyridoxal 5'-phosphate + L-glutamate + phosphate + 3 H2O + H(+). It carries out the reaction L-glutamine + H2O = L-glutamate + NH4(+). The protein operates within cofactor biosynthesis; pyridoxal 5'-phosphate biosynthesis. Functionally, catalyzes the hydrolysis of glutamine to glutamate and ammonia as part of the biosynthesis of pyridoxal 5'-phosphate. The resulting ammonia molecule is channeled to the active site of PdxS. The chain is Pyridoxal 5'-phosphate synthase subunit PdxT from Chloroflexus aggregans (strain MD-66 / DSM 9485).